Reading from the N-terminus, the 250-residue chain is Kallikrein-9 (250 aa).

Residues 1–15 (MKLGLLCALLSLLAG) form the signal peptide. Residues 23 to 249 (AIGAEECRPN…YLDWIQEIME (227 aa)) form the Peptidase S1 domain. Disulfide bonds link Cys-29–Cys-164, Cys-48–Cys-64, Cys-136–Cys-238, Cys-143–Cys-210, Cys-175–Cys-189, and Cys-200–Cys-225. Residues His-63 and Asp-111 each act as charge relay system in the active site. Asn-131 and Asn-166 each carry an N-linked (GlcNAc...) asparagine glycan. The active-site Charge relay system is Ser-204. Asn-211 carries N-linked (GlcNAc...) asparagine glycosylation.

It belongs to the peptidase S1 family. Kallikrein subfamily. As to expression, skin, thymus, trachea, cerebellum and spinal cord.

It localises to the secreted. In Homo sapiens (Human), this protein is Kallikrein-9 (KLK9).